A 360-amino-acid chain; its full sequence is Phospho-N-acetylmuramoyl-pentapeptide-transferase (360 aa).

10 helical membrane passes run 21-41 (YLTF…LWIG), 71-91 (TPTM…ILWA), 94-114 (SNPY…IGFI), 142-162 (LVVA…VLVV), 168-188 (IMPQ…VGAS), 199-219 (GLAI…AWAT), 236-256 (ASEL…FLWF), 263-283 (VFMG…IAVL), 288-308 (FLLF…ILQV), and 338-358 (VIVR…VTLK).

This sequence belongs to the glycosyltransferase 4 family. MraY subfamily. The cofactor is Mg(2+).

The protein localises to the cell inner membrane. It catalyses the reaction UDP-N-acetyl-alpha-D-muramoyl-L-alanyl-gamma-D-glutamyl-meso-2,6-diaminopimeloyl-D-alanyl-D-alanine + di-trans,octa-cis-undecaprenyl phosphate = di-trans,octa-cis-undecaprenyl diphospho-N-acetyl-alpha-D-muramoyl-L-alanyl-D-glutamyl-meso-2,6-diaminopimeloyl-D-alanyl-D-alanine + UMP. It participates in cell wall biogenesis; peptidoglycan biosynthesis. In terms of biological role, catalyzes the initial step of the lipid cycle reactions in the biosynthesis of the cell wall peptidoglycan: transfers peptidoglycan precursor phospho-MurNAc-pentapeptide from UDP-MurNAc-pentapeptide onto the lipid carrier undecaprenyl phosphate, yielding undecaprenyl-pyrophosphoryl-MurNAc-pentapeptide, known as lipid I. This chain is Phospho-N-acetylmuramoyl-pentapeptide-transferase, found in Tolumonas auensis (strain DSM 9187 / NBRC 110442 / TA 4).